Consider the following 93-residue polypeptide: Acylphosphatase (93 aa).

Positions 5-93 (TAILRVTGFV…EERKTFDIVY (89 aa)) constitute an Acylphosphatase-like domain. Residues arginine 20 and asparagine 38 contribute to the active site.

Belongs to the acylphosphatase family.

It catalyses the reaction an acyl phosphate + H2O = a carboxylate + phosphate + H(+). The chain is Acylphosphatase (acyP) from Listeria monocytogenes serotype 4b (strain F2365).